The sequence spans 200 residues: Superoxide dismutase [Mn] 1 (200 aa).

Positions 29, 76, 158, and 162 each coordinate Mn(2+).

Belongs to the iron/manganese superoxide dismutase family. In terms of assembly, homodimer or homotetramer. It depends on Mn(2+) as a cofactor.

The catalysed reaction is 2 superoxide + 2 H(+) = H2O2 + O2. With respect to regulation, inhibited by hydrogen peroxide. Is resistant to cyanide and azide inhibition. Functionally, destroys superoxide anion radicals which are normally produced within the cells and which are toxic to biological systems. This is Superoxide dismutase [Mn] 1 (sod1) from Halobacterium salinarum (strain ATCC 700922 / JCM 11081 / NRC-1) (Halobacterium halobium).